Here is a 292-residue protein sequence, read N- to C-terminus: Lipoyl synthase (292 aa).

Positions 38, 43, 49, 64, 68, 71, and 277 each coordinate [4Fe-4S] cluster. Positions 50-266 (WSKGTATFLL…REIALDAGFR (217 aa)) constitute a Radical SAM core domain.

The protein belongs to the radical SAM superfamily. Lipoyl synthase family. The cofactor is [4Fe-4S] cluster.

It is found in the cytoplasm. It catalyses the reaction [[Fe-S] cluster scaffold protein carrying a second [4Fe-4S](2+) cluster] + N(6)-octanoyl-L-lysyl-[protein] + 2 oxidized [2Fe-2S]-[ferredoxin] + 2 S-adenosyl-L-methionine + 4 H(+) = [[Fe-S] cluster scaffold protein] + N(6)-[(R)-dihydrolipoyl]-L-lysyl-[protein] + 4 Fe(3+) + 2 hydrogen sulfide + 2 5'-deoxyadenosine + 2 L-methionine + 2 reduced [2Fe-2S]-[ferredoxin]. It participates in protein modification; protein lipoylation via endogenous pathway; protein N(6)-(lipoyl)lysine from octanoyl-[acyl-carrier-protein]: step 2/2. Functionally, catalyzes the radical-mediated insertion of two sulfur atoms into the C-6 and C-8 positions of the octanoyl moiety bound to the lipoyl domains of lipoate-dependent enzymes, thereby converting the octanoylated domains into lipoylated derivatives. In Chlorobaculum parvum (strain DSM 263 / NCIMB 8327) (Chlorobium vibrioforme subsp. thiosulfatophilum), this protein is Lipoyl synthase.